The following is a 69-amino-acid chain: Small ribosomal subunit protein bS21 (69 aa).

The protein belongs to the bacterial ribosomal protein bS21 family.

The sequence is that of Small ribosomal subunit protein bS21 from Hyphomonas neptunium (strain ATCC 15444).